The following is an 87-amino-acid chain: Small ribosomal subunit protein eS21 (87 aa).

Belongs to the eukaryotic ribosomal protein eS21 family. Component of the small ribosomal subunit (SSU). Mature N.crassa ribosomes consist of a small (40S) and a large (60S) subunit. The 40S small subunit contains 1 molecule of ribosomal RNA (18S rRNA) and at least 32 different proteins. The large 60S subunit contains 3 rRNA molecules (26S, 5.8S and 5S rRNA) and at least 42 different proteins.

Its subcellular location is the cytoplasm. Functionally, component of the ribosome, a large ribonucleoprotein complex responsible for the synthesis of proteins in the cell. The small ribosomal subunit (SSU) binds messenger RNAs (mRNAs) and translates the encoded message by selecting cognate aminoacyl-transfer RNA (tRNA) molecules. The large subunit (LSU) contains the ribosomal catalytic site termed the peptidyl transferase center (PTC), which catalyzes the formation of peptide bonds, thereby polymerizing the amino acids delivered by tRNAs into a polypeptide chain. The nascent polypeptides leave the ribosome through a tunnel in the LSU and interact with protein factors that function in enzymatic processing, targeting, and the membrane insertion of nascent chains at the exit of the ribosomal tunnel. The chain is Small ribosomal subunit protein eS21 (crp-7) from Neurospora crassa (strain ATCC 24698 / 74-OR23-1A / CBS 708.71 / DSM 1257 / FGSC 987).